The sequence spans 153 residues: Myoglobin (153 aa).

In terms of domain architecture, Globin spans 1–147; it reads MATACVKSLE…FSDECLDHLK (147 aa). His-94 contacts heme b.

The protein belongs to the globin family. As to quaternary structure, homodimer; disulfide-linked. Post-translationally, the N-terminus is blocked. Body wall globin is localized in cellular compartments belonging to the hypodermis, the dorsal, ventral and lateral cords, the nerve ring, and body wall muscle.

It is found in the cytoplasm. Functionally, high oxygen affinity. Probably supplies oxygen needed for muscle activity. The chain is Myoglobin from Ascaris suum (Pig roundworm).